Here is a 180-residue protein sequence, read N- to C-terminus: ATP-dependent protease subunit HslV (180 aa).

Threonine 8 is a catalytic residue. Positions 165, 168, and 171 each coordinate Na(+).

The protein belongs to the peptidase T1B family. HslV subfamily. A double ring-shaped homohexamer of HslV is capped on each side by a ring-shaped HslU homohexamer. The assembly of the HslU/HslV complex is dependent on binding of ATP.

Its subcellular location is the cytoplasm. It catalyses the reaction ATP-dependent cleavage of peptide bonds with broad specificity.. Its activity is regulated as follows. Allosterically activated by HslU binding. Functionally, protease subunit of a proteasome-like degradation complex believed to be a general protein degrading machinery. This Staphylococcus saprophyticus subsp. saprophyticus (strain ATCC 15305 / DSM 20229 / NCIMB 8711 / NCTC 7292 / S-41) protein is ATP-dependent protease subunit HslV.